The following is a 438-amino-acid chain: Serine hydroxymethyltransferase 1 (438 aa).

Residues Leu-130 and 134 to 136 (GHL) contribute to the (6S)-5,6,7,8-tetrahydrofolate site. N6-(pyridoxal phosphate)lysine is present on Lys-239.

It belongs to the SHMT family. As to quaternary structure, homodimer. Requires pyridoxal 5'-phosphate as cofactor.

It is found in the cytoplasm. It carries out the reaction (6R)-5,10-methylene-5,6,7,8-tetrahydrofolate + glycine + H2O = (6S)-5,6,7,8-tetrahydrofolate + L-serine. Its pathway is one-carbon metabolism; tetrahydrofolate interconversion. It functions in the pathway amino-acid biosynthesis; glycine biosynthesis; glycine from L-serine: step 1/1. Functionally, catalyzes the reversible interconversion of serine and glycine with tetrahydrofolate (THF) serving as the one-carbon carrier. This reaction serves as the major source of one-carbon groups required for the biosynthesis of purines, thymidylate, methionine, and other important biomolecules. Also exhibits THF-independent aldolase activity toward beta-hydroxyamino acids, producing glycine and aldehydes, via a retro-aldol mechanism. Thus, is able to catalyze the cleavage of L-allo-threonine. This is Serine hydroxymethyltransferase 1 from Mycobacterium tuberculosis (strain ATCC 25618 / H37Rv).